The following is a 434-amino-acid chain: Serine/threonine-protein kinase Sgk1-A (434 aa).

The interval 66 to 94 (PQEPELLNENSSPPPSPSQQINLGPSSNP) is disordered. The segment covering 84–94 (QQINLGPSSNP) has biased composition (polar residues). One can recognise a Protein kinase domain in the interval 101-358 (FQFLKIIGKG…FMEIKNHIFF (258 aa)). ATP contacts are provided by residues 107 to 115 (IGKGSFGKV) and Lys-130. Asp-225 functions as the Proton acceptor in the catalytic mechanism. The 76-residue stretch at 359-434 (SPINWDDLIN…SYAPPMESYL (76 aa)) folds into the AGC-kinase C-terminal domain.

Belongs to the protein kinase superfamily. AGC Ser/Thr protein kinase family.

It is found in the cytoplasm. The protein resides in the nucleus. Its subcellular location is the endoplasmic reticulum. It catalyses the reaction L-seryl-[protein] + ATP = O-phospho-L-seryl-[protein] + ADP + H(+). The catalysed reaction is L-threonyl-[protein] + ATP = O-phospho-L-threonyl-[protein] + ADP + H(+). Protein kinase that may play an important role in cellular stress response. Plays an important role in activating certain potassium, sodium, and chloride channels, suggesting an involvement in the regulation of processes such as cell survival, neuronal excitability, and renal sodium excretion. This Xenopus laevis (African clawed frog) protein is Serine/threonine-protein kinase Sgk1-A (sgk1-a).